The primary structure comprises 305 residues: uncharacterized protein (305 aa).

This sequence belongs to the IIV-6 436R family.

This is an uncharacterized protein from Acheta domesticus (House cricket).